A 602-amino-acid polypeptide reads, in one-letter code: Zinc finger protein 652-B (602 aa).

The tract at residues 60-232 (FQDSKPTNEV…PSDKAKSEEK (173 aa)) is disordered. Over residues 65–79 (PTNEVHAVKGERENS) the composition is skewed to basic and acidic residues. Composition is skewed to acidic residues over residues 80-108 (GESEEEEDEDDDDDDDDDDDDEEGEDEDE) and 148-167 (DDEGGDSGEDDQDSHEDEEN). Residues 222-232 (SPSDKAKSEEK) are compositionally biased toward basic and acidic residues. The segment at 235–258 (LTCDKCPRVFNTRWYLEKHMNVTH) adopts a C2H2-type 1 zinc-finger fold. The segment at 262–284 (QICDKCGKKFVLESELSLHLQTD) adopts a C2H2-type 2; degenerate zinc-finger fold. C2H2-type zinc fingers lie at residues 289–312 (IQCITCNKTFKKLWSLHEHIKIVH), 319–341 (FSCEICEKKFYTMAHVRKHLVAH), 347–369 (FTCETCGKSFKRSMSLKVHSLQH), 375–397 (FRCENCDERFQYKYQLRSHMSIH), 403–425 (FMCQWCGKDFNMKQYFDEHMKTH), and 431–453 (FICEICGKSFTSRPNMKRHRRTH). The segment at 459–482 (YPCDVCGMRFRFSNMLKAHKEKCF) adopts a C2H2-type 9; degenerate zinc-finger fold. A disordered region spans residues 543 to 575 (PFSHLHLHPHSHTHHLAVPPVPHLPPPPALFKS). The segment covering 545 to 557 (SHLHLHPHSHTHH) has biased composition (basic residues). Positions 561–571 (PPVPHLPPPPA) are enriched in pro residues.

The protein belongs to the krueppel C2H2-type zinc-finger protein family.

It localises to the nucleus. May be involved in transcriptional regulation. The sequence is that of Zinc finger protein 652-B (znf652-b) from Xenopus laevis (African clawed frog).